Reading from the N-terminus, the 309-residue chain is Olfactory receptor 1A1 (309 aa).

Residues 1–25 (MRENNQSSTLEFILLGVTGQQEQED) lie on the Extracellular side of the membrane. Residue Asn-5 is glycosylated (N-linked (GlcNAc...) asparagine). The chain crosses the membrane as a helical span at residues 26-49 (FFYILFLFIYPITLIGNLLIVLAI). Residues 50 to 57 (CSDVHLHN) are Cytoplasmic-facing. Residues 58–79 (PMYFLLANLSLVDIFFSSVTIP) form a helical membrane-spanning segment. The Extracellular segment spans residues 80–100 (KMLANHLSGSKSISFGGCLTQ). A disulfide bond links Cys-97 and Cys-189. A helical membrane pass occupies residues 101 to 120 (MYFMIDLGNTDSYTLAAMAY). Residues 121 to 139 (DRAVAISRPLHYTTIMSPR) lie on the Cytoplasmic side of the membrane. A helical membrane pass occupies residues 140–158 (SCIWLIAGSWVIGNANALP). Residues 159–195 (HTLLTASLSFCGNQEVANFYCDITPLLKLSCSDIHFH) are Extracellular-facing. The helical transmembrane segment at 196 to 218 (VKMMYLGVGIFSVPLLCIIVSYI) threads the bilayer. Topologically, residues 219-235 (RVFSTVFQVPSTKGVLK) are cytoplasmic. The helical transmembrane segment at 236–258 (AFSTCGSHLTVVSLYYGTVMGMY) threads the bilayer. The Extracellular portion of the chain corresponds to 259-270 (FRPLTNYSLKDA). An N-linked (GlcNAc...) asparagine glycan is attached at Asn-264. The helical transmembrane segment at 271–290 (VITVMCTAVTPMLNPFIYSL) threads the bilayer. Residues 291 to 309 (RNRDMKAALQKLFNKRISS) are Cytoplasmic-facing.

The protein belongs to the G-protein coupled receptor 1 family.

The protein resides in the cell membrane. Odorant receptor. This is Olfactory receptor 1A1 (OR1A1) from Gorilla gorilla gorilla (Western lowland gorilla).